The chain runs to 93 residues: Sec-independent protein translocase protein TatA (93 aa).

Residues 1 to 21 (MGAMSPWHWAIVALVVVILFG) traverse the membrane as a helical segment. A disordered region spans residues 44–93 (KEMQNDNSTPAPTAQQSAPAELPVADTTTAPVTPPAPVQPQPQHTEPKSA). The span at 51 to 74 (STPAPTAQQSAPAELPVADTTTAP) shows a compositional bias: low complexity.

The protein belongs to the TatA/E family. In terms of assembly, the Tat system comprises two distinct complexes: a TatABC complex, containing multiple copies of TatA, TatB and TatC subunits, and a separate TatA complex, containing only TatA subunits. Substrates initially bind to the TatABC complex, which probably triggers association of the separate TatA complex to form the active translocon.

It localises to the cell membrane. Functionally, part of the twin-arginine translocation (Tat) system that transports large folded proteins containing a characteristic twin-arginine motif in their signal peptide across membranes. TatA could form the protein-conducting channel of the Tat system. The protein is Sec-independent protein translocase protein TatA of Rhodococcus opacus (strain B4).